The sequence spans 417 residues: Imidazolonepropionase (417 aa).

The Fe(3+) site is built by His80 and His82. Zn(2+) is bound by residues His80 and His82. 4-imidazolone-5-propanoate contacts are provided by Arg89, Tyr152, and His187. Tyr152 provides a ligand contact to N-formimidoyl-L-glutamate. Residue His252 participates in Fe(3+) binding. His252 contributes to the Zn(2+) binding site. Position 255 (Glu255) interacts with 4-imidazolone-5-propanoate. Fe(3+) is bound at residue Asp326. Residue Asp326 coordinates Zn(2+). N-formimidoyl-L-glutamate-binding residues include Asn328 and Gly330. Ser331 contributes to the 4-imidazolone-5-propanoate binding site.

The protein belongs to the metallo-dependent hydrolases superfamily. HutI family. Requires Zn(2+) as cofactor. Fe(3+) serves as cofactor.

It is found in the cytoplasm. The enzyme catalyses 4-imidazolone-5-propanoate + H2O = N-formimidoyl-L-glutamate. It functions in the pathway amino-acid degradation; L-histidine degradation into L-glutamate; N-formimidoyl-L-glutamate from L-histidine: step 3/3. Catalyzes the hydrolytic cleavage of the carbon-nitrogen bond in imidazolone-5-propanoate to yield N-formimidoyl-L-glutamate. It is the third step in the universal histidine degradation pathway. This chain is Imidazolonepropionase, found in Bacteroides thetaiotaomicron (strain ATCC 29148 / DSM 2079 / JCM 5827 / CCUG 10774 / NCTC 10582 / VPI-5482 / E50).